Reading from the N-terminus, the 1010-residue chain is MSEHPLTLQSMIATILRFWSEQGCVIHQGYDLEVGAGTFNPATFLRALGPEPYKAAYVEPSRRPQDGRYGVHPNRLQNYHQLQVILKPVPENFLSLYTESLRAIGLDLRDHDIRFIHDDWENPTIGAWGLGWEVWLNGMEITQLTYFQAIGSKPLDTISGEITYGIERIAMYLQKKTSIYDVLWNDTLTYGQITQASEKAWSEYNFDYANTEMWFKHFEDFAEEALRTLKNGLSVPAYDFVIKASHAFNILDARGTISVTERTRYIARIRQLTRLVADSYVEWRASLNYPLLSLSSTSEPKETSESVVPMISSTEDLLLEIGSEELPATFVPIGIQQLESLARQVLTDHNIVYEGLEVLGSPRRLALLVKNVAPEVVQKAFEKKGPMLTSLFSPDGDVSPQGQQFFASQGVDISHYQDLSRHASLAIRTVNGSEYLFLLHPEIRLRTADILMQELPLLIQRMKFPKKMVWDNSGVEYARPIRWLVALYGEHILPITLGTIIASRNSFGHRQLDPRKISISSPQDYVETLRQACVVVSQKERRMIIEQGLRAHSSDTISAIPLPRLIEEATFLSEHPFVSCGQFSEQFCALPKELLIAEMVNHQKYFPTHETSSGAISNFFIVVCDNSPNDTIIEGNEKALTPRLTDGEFLFKQDLQTPLTTFIEKLKSVTYFEALGSLYDKVERLKAHQRVFSTFSSLAASEDLDIAIQYCKADLVSAVVNEFPELQGIMGEYYLKHANLPTASAVAVGEHLRHITMGQKLSTIGTLLSLLDRLDNLLACFILGLKPTSSHDPYALRRQSLEVLTLVSASRLPIDLASLLDRLADHFPSTIEEKVWDKSKTIHEILEFIWGRLKTFMGSLEFRKDEIAAVLIDSATKNPIEILDTAEALQLLKEEHTEKLAVITTTHNRLKKILSSLKLSMTSSPIEVLGDRESNFKQVLDAFPGFPKETSAHAFLEYFLSLADLSNDIQDFLNTVHIANDDGAIRNLRISLLLTAMDKFSLCHWESVAV.

The interval 1–312 is glycine--tRNA ligase alpha subunit; the sequence is MSEHPLTLQS…TSESVVPMIS (312 aa). The glycine--tRNA ligase beta subunit stretch occupies residues 313–1010; that stretch reads STEDLLLEIG…SLCHWESVAV (698 aa).

This sequence belongs to the class-II aminoacyl-tRNA synthetase family.

The protein localises to the cytoplasm. It carries out the reaction tRNA(Gly) + glycine + ATP = glycyl-tRNA(Gly) + AMP + diphosphate. The chain is Glycine--tRNA ligase (glyQS) from Chlamydia pneumoniae (Chlamydophila pneumoniae).